The chain runs to 1089 residues: MQKASVLLFLAWVCFLFYAGIALFTSGFLLTRLELTNHSSCQEPPGPGSLPWGSQGKPGACWMASRFSRVVLVLIDALRFDFAQPQHSHVPREPPVSLPFLGKLSSLQRILEIQPHHARLYRSQVDPPTTTMQRLKALTTGSLPTFIDAGSNFASHAIVEDNLIKQLTSAGRRVVFMGDDTWKDLFPGAFSKAFFFPSFNVRDLDTVDNGILEHLYPTMDSGEWDVLIAHFLGVDHCGHKHGPHHPEMAKKLSQMDQVIQGLVERLENDTLLVVAGDHGMTTNGDHGGDSELEVSAALFLYSPTAVFPSTPPEEPEVIPQVSLVPTLALLLGLPIPFGNIGEVMAELFSGGEDSQPHSSALAQASALHLNAQQVSRFLHTYSAATQDLQAKELHQLQNLFSKASADYQWLLQSPKGAEATLPTVIAELQQFLRGARAMCIESWARFSLVRMAGGTALLAASCFICLLASQWAISPGFPFCPLLLTPVAWGLVGAIAYAGLLGTIELKLDLVLLGAVAAVSSFLPFLWKAWAGWGSKRPLATLFPIPGPVLLLLLFRLAVFFSDSFVVAEARATPFLLGSFILLLVVQLHWEGQLLPPKLLTMPRLGTSATTNPPRHNGAYALRLGIGLLLCTRLAGLFHRCPEETPVCHSSPWLSPLASMVGGRAKNLWYGACVAALVALLAAVRLWLRRYGNLKSPEPPMLFVRWGLPLMALGTAAYWALASGADEAPPRLRVLVSGASMVLPRAVAGLAASGLALLLWKPVTVLVKAGAGAPRTRTVLTPFSGPPTSQADLDYVVPQIYRHMQEEFRGRLERTKSQGPLTVAAYQLGSVYSAAMVTALTLLAFPLLLLHAERISLVFLLLFLQSFLLLHLLAAGIPVTTPGPFTVPWQAVSAWALMATQTFYSTGHQPVFPAIHWHAAFVGFPEGHGSCTWLPALLVGANTFASHLLFAVGCPLLLLWPFLCESQGLRKRQQPPGNEADARVRPEEEEEPLMEMRLRDAPQHFYAALLQLGLKYLFILGIQILACALAASILRRHLMVWKVFAPKFIFEAVGFIVSSVGLLLGIALVMRVDGAVSSWFRQLFLAQQR.

A helical transmembrane segment spans residues 4–24 (ASVLLFLAWVCFLFYAGIALF). A glycan (N-linked (GlcNAc...) asparagine) is linked at Asn-268. A run of 13 helical transmembrane segments spans residues 457–477 (LLAA…SPGF), 482–502 (LLLT…GLLG), 510–530 (LVLL…WKAW), 541–561 (TLFP…AVFF), 575–595 (FLLG…GQLL), 668–688 (LWYG…RLWL), 701–721 (MLFV…YWAL), 747–767 (VAGL…TVLV), 830–850 (SVYS…LLLL), 857–877 (LVFL…AAGI), 944–964 (FASH…PFLC), 1014–1034 (LKYL…ASIL), and 1048–1068 (FIFE…GIAL).

This sequence belongs to the PIGG/PIGN/PIGO family. PIGO subfamily. As to quaternary structure, part of the ethanolamine phosphate transferase 3 complex composed by PIGO and PIGF. PIGF is required to stabilize PIGO.

Its subcellular location is the endoplasmic reticulum membrane. It functions in the pathway glycolipid biosynthesis; glycosylphosphatidylinositol-anchor biosynthesis. Its function is as follows. Catalytic subunit of the ethanolamine phosphate transferase 3 complex that transfers an ethanolamine phosphate (EtNP) from a phosphatidylethanolamine (PE) to the 6-OH position of the third alpha-1,2-linked mannose of an alpha-D-Man-(1-&gt;2)-alpha-D-Man-(1-&gt;6)-2-PEtn-alpha-D-Man-(1-&gt;4)-alpha-D-GlcN-(1-&gt;6)-(1-radyl,2-acyl-sn-glycero-3-phospho)-2-acyl-inositol (also termed H6) intermediate to generate a 6-PEtn-alpha-D-Man-(1-&gt;2)-alpha-D-Man-(1-&gt;6)-2-PEtn-alpha-D-Man-(1-&gt;4)-alpha-D-GlcN-(1-&gt;6)-(1-radyl,2-acyl-sn-glycero-3-phospho)-2-acyl-inositol (also termed H7) and participates in the tenth step of the glycosylphosphatidylinositol-anchor biosynthesis. This is GPI ethanolamine phosphate transferase 3, catalytic subunit from Homo sapiens (Human).